The sequence spans 384 residues: Alanine racemase (384 aa).

The Proton acceptor; specific for D-alanine role is filled by Lys-46. Residue Lys-46 is modified to N6-(pyridoxal phosphate)lysine. Position 144 (Arg-144) interacts with substrate. Tyr-278 serves as the catalytic Proton acceptor; specific for L-alanine. Residue Met-326 coordinates substrate.

This sequence belongs to the alanine racemase family. The cofactor is pyridoxal 5'-phosphate.

The enzyme catalyses L-alanine = D-alanine. It functions in the pathway amino-acid biosynthesis; D-alanine biosynthesis; D-alanine from L-alanine: step 1/1. Catalyzes the interconversion of L-alanine and D-alanine. May also act on other amino acids. This Frankia casuarinae (strain DSM 45818 / CECT 9043 / HFP020203 / CcI3) protein is Alanine racemase (alr).